Here is a 398-residue protein sequence, read N- to C-terminus: MEEEEKNPSSIYIVADLLEDIFLRLPLKSILISKSVSKRWRSILESKTFVERRMSLQKKRKILAAYNCKCGWEPRLLPGSSQCKGNEEIVYLHCNAAQPSFTCDGLVCILEPRWIDVLNPWTRQLRRYGFGFGTIFGVGSAFSPRHWAMGFGKDKVTGSYKVVKMCLISFSEICARDPEVEYSVLDVETGEWRMLSPPPYKVFEVRKSECANGSIYWLHKPTERAWTILALDLHKEELHNISVPDMSVTQETFQIVNLEDRLAIANTYTKTEWKLEIWSMDTEVETWTKTYSIDLENRVASRERRNRWFTPVSVSKQGNIVFYDNHKRLFKYYPRKNEILYLSADTCVISPFFENLAPLPQKSTLHTPIIAGEPNAPLTTLVVVGSIWSPLFLFSVKL.

An F-box domain is found at 8-55 (PSSIYIVADLLEDIFLRLPLKSILISKSVSKRWRSILESKTFVERRMS).

This chain is Putative F-box protein At4g17780, found in Arabidopsis thaliana (Mouse-ear cress).